A 571-amino-acid polypeptide reads, in one-letter code: Urease subunit alpha (571 aa).

One can recognise a Urease domain in the interval 134–571; sequence GAIDTHIHFI…LPMAQRYFLF (438 aa). 3 residues coordinate Ni(2+): histidine 139, histidine 141, and lysine 222. At lysine 222 the chain carries N6-carboxylysine. Residue histidine 224 participates in substrate binding. Residues histidine 251 and histidine 277 each coordinate Ni(2+). The active-site Proton donor is histidine 325. Aspartate 365 provides a ligand contact to Ni(2+).

The protein belongs to the metallo-dependent hydrolases superfamily. Urease alpha subunit family. Heterotrimer of UreA (gamma), UreB (beta) and UreC (alpha) subunits. Three heterotrimers associate to form the active enzyme. It depends on Ni cation as a cofactor. In terms of processing, carboxylation allows a single lysine to coordinate two nickel ions.

The protein resides in the cytoplasm. It catalyses the reaction urea + 2 H2O + H(+) = hydrogencarbonate + 2 NH4(+). Its pathway is nitrogen metabolism; urea degradation; CO(2) and NH(3) from urea (urease route): step 1/1. The sequence is that of Urease subunit alpha from Bordetella bronchiseptica (strain ATCC BAA-588 / NCTC 13252 / RB50) (Alcaligenes bronchisepticus).